Here is a 184-residue protein sequence, read N- to C-terminus: MSKAVVVYFSGYGHTKRVAQAAAEGAQASLVEIDSEGNIPEAAWDLLDQAQSILFGAPTYMGSVPWQFKKFADATSRKWFVRQWQDKVFGGFTNSASLNGDKQVSLILMHTLASQHGGIWVSLGLAPANTSASSRADINNLGASVGALVQSPSDADAQAIPSGDLETVKLYAARVARIGQQLHA.

In terms of domain architecture, Flavodoxin-like spans Ala4–Ala176. FMN is bound by residues Ser10 to His14 and Gly91 to Ala147.

This sequence belongs to the FldP flavodoxin family. FMN is required as a cofactor.

Its function is as follows. Flavodoxins are low-potential electron donors to a number of redox enzymes. FldP protects the cell from oxidative stress and reactive oxygen species (ROS) damage, thereby expanding the capabilities of P.aeruginosa to thrive in hostile environments, and contributes to bacterial survival within the host. In vitro, is able to mediate ferredoxin-NADP(H) reductase (FNR)-driven cytochrome c reduction. The protein is Flavodoxin FldP of Pseudomonas aeruginosa (strain UCBPP-PA14).